Here is a 338-residue protein sequence, read N- to C-terminus: Glutamate/glutamine/aspartate/asparagine-binding protein BztA (338 aa).

The N-terminal stretch at 1-22 (MKKSAFFGSVALAALVAGAASA) is a signal peptide.

The protein belongs to the bacterial solute-binding protein 3 family.

It is found in the periplasm. Its function is as follows. Part of a binding-protein-dependent transport system for glutamate, glutamine, aspartate and asparagine. The protein is Glutamate/glutamine/aspartate/asparagine-binding protein BztA (bztA) of Rhodobacter capsulatus (strain ATCC BAA-309 / NBRC 16581 / SB1003).